Reading from the N-terminus, the 356-residue chain is Phospho-N-acetylmuramoyl-pentapeptide-transferase (356 aa).

10 consecutive transmembrane segments (helical) span residues 4-24 (ILLA…WFIH), 53-73 (GGAV…LVTW), 76-96 (PSIS…IGFL), 116-136 (LLGQ…FPDV), 152-172 (ISWL…LIAG), 186-206 (LATG…IWQF), 228-248 (DIAV…WWNA), 253-273 (IFLG…MAVV), 278-298 (LLLV…MLQV), and 333-353 (FWII…AEWV).

Belongs to the glycosyltransferase 4 family. MraY subfamily. Requires Mg(2+) as cofactor.

Its subcellular location is the cell membrane. It carries out the reaction UDP-N-acetyl-alpha-D-muramoyl-L-alanyl-gamma-D-glutamyl-meso-2,6-diaminopimeloyl-D-alanyl-D-alanine + di-trans,octa-cis-undecaprenyl phosphate = di-trans,octa-cis-undecaprenyl diphospho-N-acetyl-alpha-D-muramoyl-L-alanyl-D-glutamyl-meso-2,6-diaminopimeloyl-D-alanyl-D-alanine + UMP. It participates in cell wall biogenesis; peptidoglycan biosynthesis. Catalyzes the initial step of the lipid cycle reactions in the biosynthesis of the cell wall peptidoglycan: transfers peptidoglycan precursor phospho-MurNAc-pentapeptide from UDP-MurNAc-pentapeptide onto the lipid carrier undecaprenyl phosphate, yielding undecaprenyl-pyrophosphoryl-MurNAc-pentapeptide, known as lipid I. This Cutibacterium acnes (strain DSM 16379 / KPA171202) (Propionibacterium acnes) protein is Phospho-N-acetylmuramoyl-pentapeptide-transferase.